A 573-amino-acid polypeptide reads, in one-letter code: Protein translocase subunit SecD (573 aa).

The chain crosses the membrane as a helical span at residues tyrosine 13–aspartate 33. Residues alanine 127–proline 200 are disordered. 2 stretches are compositionally biased toward pro residues: residues glutamine 135–alanine 154 and serine 161–glutamate 194. 5 consecutive transmembrane segments (helical) span residues alanine 385–tyrosine 405, leucine 410–leucine 430, alanine 441–phenylalanine 461, isoleucine 489–glycine 509, and phenylalanine 514–tryptophan 534.

The protein belongs to the SecD/SecF family. SecD subfamily. Forms a complex with SecF. Part of the essential Sec protein translocation apparatus which comprises SecA, SecYEG and auxiliary proteins SecDF. Other proteins may also be involved.

Its subcellular location is the cell membrane. Part of the Sec protein translocase complex. Interacts with the SecYEG preprotein conducting channel. SecDF uses the proton motive force (PMF) to complete protein translocation after the ATP-dependent function of SecA. This chain is Protein translocase subunit SecD, found in Mycobacterium tuberculosis (strain CDC 1551 / Oshkosh).